The primary structure comprises 273 residues: uncharacterized protein (273 aa).

Residues 7 to 27 traverse the membrane as a helical segment; that stretch reads LTLGICLVLLIILIVGYVIMT.

This sequence belongs to the staphylococcal tandem lipoprotein family.

The protein localises to the cell membrane. This is an uncharacterized protein from Staphylococcus aureus (strain MSSA476).